Reading from the N-terminus, the 249-residue chain is MPEKAEPAEGWPVVEGDYVVGDPEAPVHVVTLGSHIEEDILKAAGEDKVAIAGPCKTENIGIEKVIANVIANPNIRFGVLCGAEVTGHLTGQCFKAMYENGVDPDSGEIIGAEGAIPYLENIPEEAVERYRDQIVELVDLIDVEDVDEIVKAIEECVEKDPGAYEEGPMTISLEEEEEEELAEVAGMPVSAETVTVEYRINDVRVGVKSIGAMQRYMAGYLSGRTMGLLIGIISGMIFLFLPMVVLGGV.

Topologically, residues 2–225 (PEKAEPAEGW…YMAGYLSGRT (224 aa)) are cytoplasmic. Residue H88 participates in 5-hydroxybenzimidazolylcob(I)amide binding. A helical membrane pass occupies residues 226 to 246 (MGLLIGIISGMIFLFLPMVVL). Topologically, residues 247–249 (GGV) are extracellular.

Belongs to the MtrA family. As to quaternary structure, the complex is composed of 8 subunits; MtrA, MtrB, MtrC, MtrD, MtrE, MtrF, MtrG and MtrH. 5-hydroxybenzimidazolylcob(I)amide serves as cofactor.

It is found in the cell membrane. The catalysed reaction is 5-methyl-5,6,7,8-tetrahydromethanopterin + coenzyme M + 2 Na(+)(in) = 5,6,7,8-tetrahydromethanopterin + methyl-coenzyme M + 2 Na(+)(out). It functions in the pathway one-carbon metabolism; methanogenesis from CO(2); methyl-coenzyme M from 5,10-methylene-5,6,7,8-tetrahydromethanopterin: step 2/2. Its function is as follows. Part of a complex that catalyzes the formation of methyl-coenzyme M and tetrahydromethanopterin from coenzyme M and methyl-tetrahydromethanopterin. This is an energy-conserving, sodium-ion translocating step. This chain is Tetrahydromethanopterin S-methyltransferase subunit A, found in Methanopyrus kandleri (strain AV19 / DSM 6324 / JCM 9639 / NBRC 100938).